Consider the following 201-residue polypeptide: Small ribosomal subunit protein uS4 (201 aa).

The disordered stretch occupies residues 22–47 (TGKELARRPYAPGDHGNDRRGKLSEY). Positions 93 to 153 (RRLDNMVYRL…EKSKNLDVIK (61 aa)) constitute an S4 RNA-binding domain.

The protein belongs to the universal ribosomal protein uS4 family. As to quaternary structure, part of the 30S ribosomal subunit. Contacts protein S5. The interaction surface between S4 and S5 is involved in control of translational fidelity.

One of the primary rRNA binding proteins, it binds directly to 16S rRNA where it nucleates assembly of the body of the 30S subunit. Functionally, with S5 and S12 plays an important role in translational accuracy. This Limosilactobacillus fermentum (strain NBRC 3956 / LMG 18251) (Lactobacillus fermentum) protein is Small ribosomal subunit protein uS4.